We begin with the raw amino-acid sequence, 973 residues long: Piwi-like protein 2 (973 aa).

Residues 28 to 65 (WPQASKPLDPALGRGAPAGRGHVFGKPEEPSTQRGPAQ) form a disordered region. Positions 34–48 (PLDPALGRGAPAGRG) are enriched in low complexity. Symmetric dimethylarginine is present on Arg-47. An omega-N-methylarginine; by PRMT5; alternate mark is found at Arg-76 and Arg-97. Symmetric dimethylarginine; by PRMT5; alternate is present on Arg-76. At Arg-97 the chain carries Symmetric dimethylarginine; alternate. Residue Arg-102 is modified to Symmetric dimethylarginine; by PRMT5; alternate. Position 102 is an omega-N-methylarginine; alternate (Arg-102). Symmetric dimethylarginine occurs at positions 146 and 158. The disordered stretch occupies residues 162–199 (GISREVDKPPCTFSTPSRGPPQLSSPPALPQSPLHSPD). The residue at position 165 (Arg-165) is a Symmetric dimethylarginine; by PRMT5. Positions 389 to 502 (CVLDVMHAIY…LLPELSFMTG (114 aa)) constitute a PAZ domain. The residue at position 551 (Arg-551) is a Symmetric dimethylarginine; by PRMT5. Residues 668–959 (MVVCIIMGPR…LAFLSGHILH (292 aa)) form the Piwi domain. Residues Asp-745, Glu-783, Asp-815, and His-948 contribute to the active site.

It belongs to the argonaute family. Piwi subfamily. As to quaternary structure, interacts with DDX4, MAEL, EIF3A, EIF4E, EIF4G, PRMT5 and WDR77. Associates with EIF4E- and EIF4G-containing m7G cap-binding complexes. Interacts (when methylated on arginine residues) with TDRD1 and TDRKH/TDRD2. Interacts with TDRD12. Component of the PET complex, at least composed of EXD1, PIWIL2, TDRD12 and piRNAs. Interacts with MOV10L1. Interacts with GPAT2. Interacts with TEX19. Interacts with GSK3B. Interacts (via PIWI domain) with BMAL1 and CLOCK. Interacts with TEX15. The cofactor is Mg(2+). Arginine methylation by PRMT5 is required for the interaction with Tudor domain-containing protein TDRD1 and subsequent localization to the meiotic nuage, also named P granule. In terms of tissue distribution, expressed in adult testis and in most tumors.

The protein resides in the cytoplasm. Functionally, endoribonuclease that plays a central role during spermatogenesis by repressing transposable elements and preventing their mobilization, which is essential for the germline integrity. Plays an essential role in meiotic differentiation of spermatocytes, germ cell differentiation and in self-renewal of spermatogonial stem cells. Acts via the piRNA metabolic process, which mediates the repression of transposable elements during meiosis by forming complexes composed of piRNAs and Piwi proteins and govern the methylation and subsequent repression of transposons. During piRNA biosynthesis, plays a key role in the piRNA amplification loop, also named ping-pong amplification cycle, by acting as a 'slicer-competent' piRNA endoribonuclease that cleaves primary piRNAs, which are then loaded onto 'slicer-incompetent' PIWIL4. PIWIL2 slicing produces a pre-miRNA intermediate, which is then processed in mature piRNAs, and as well as a 16 nucleotide by-product that is degraded. Required for PIWIL4/MIWI2 nuclear localization and association with secondary piRNAs antisense. Besides their function in transposable elements repression, piRNAs are probably involved in other processes during meiosis such as translation regulation. Indirectly modulates expression of genes such as PDGFRB, SLC2A1, ITGA6, GJA7, THY1, CD9 and STRA8. When overexpressed, acts as an oncogene by inhibition of apoptosis and promotion of proliferation in tumors. Represses circadian rhythms by promoting the stability and activity of core clock components BMAL1 and CLOCK by inhibiting GSK3B-mediated phosphorylation and ubiquitination-dependent degradation of these proteins. The sequence is that of Piwi-like protein 2 (PIWIL2) from Homo sapiens (Human).